The chain runs to 2410 residues: Cell wall alpha-1,3-glucan synthase ags1 (2410 aa).

3 positions are modified to phosphoserine: Ser-1643, Ser-1644, and Ser-1651. Thr-1653 carries the phosphothreonine modification. The tract at residues 1685–1706 (SLSLGSRRGPGHTTEDDASDGL) is disordered. 2 positions are modified to phosphoserine: Ser-1738 and Ser-1812. The tract at residues 1796–1827 (QDDLSDPARSVDSDSVSPPLPPFVAGSNPNAR) is disordered. The span at 1802-1827 (PARSVDSDSVSPPLPPFVAGSNPNAR) shows a compositional bias: low complexity.

The protein belongs to the glycosyltransferase group 1 family. In terms of assembly, interacts with sad1.

The enzyme catalyses [(1-&gt;3)-alpha-D-glucosyl](n) + UDP-alpha-D-glucose = [(1-&gt;3)-alpha-D-glucosyl](n+1) + UDP + H(+). In terms of biological role, required for alpha-1,3-glucan and alpha-1,4-glucan production which are required for cell wall synthesis. The sequence is that of Cell wall alpha-1,3-glucan synthase ags1 (ags1) from Schizosaccharomyces pombe (strain 972 / ATCC 24843) (Fission yeast).